Here is a 339-residue protein sequence, read N- to C-terminus: Small ribosomal subunit biogenesis GTPase RsgA (339 aa).

The CP-type G domain maps to Met111–Phe271. GTP-binding positions include Asn159–Asp162 and Gly213–Ser221. 4 residues coordinate Zn(2+): Cys295, Cys300, His302, and Cys308.

It belongs to the TRAFAC class YlqF/YawG GTPase family. RsgA subfamily. As to quaternary structure, monomer. Associates with 30S ribosomal subunit, binds 16S rRNA. Zn(2+) serves as cofactor.

It is found in the cytoplasm. Its function is as follows. One of several proteins that assist in the late maturation steps of the functional core of the 30S ribosomal subunit. Helps release RbfA from mature subunits. May play a role in the assembly of ribosomal proteins into the subunit. Circularly permuted GTPase that catalyzes slow GTP hydrolysis, GTPase activity is stimulated by the 30S ribosomal subunit. The chain is Small ribosomal subunit biogenesis GTPase RsgA from Pseudomonas aeruginosa (strain ATCC 15692 / DSM 22644 / CIP 104116 / JCM 14847 / LMG 12228 / 1C / PRS 101 / PAO1).